The sequence spans 122 residues: uncharacterized protein (122 aa).

T55 bears the Phosphothreonine mark. Phosphoserine occurs at positions 72, 86, 96, 112, and 118.

It localises to the cytoplasm. This is an uncharacterized protein from Homo sapiens (Human).